We begin with the raw amino-acid sequence, 397 residues long: Elongation factor Tu (397 aa).

A tr-type G domain is found at 10-207 (KPHLNIGTIG…AVDAYIPEPE (198 aa)). Residues 19 to 26 (GHVDHGKT) form a G1 region. Position 19-26 (19-26 (GHVDHGKT)) interacts with GTP. T26 lines the Mg(2+) pocket. The interval 60-64 (GVTIN) is G2. A G3 region spans residues 81–84 (DCPG). GTP is bound by residues 81-85 (DCPGH) and 136-139 (NKVD). Positions 136-139 (NKVD) are G4. The segment at 174–176 (SAL) is G5.

The protein belongs to the TRAFAC class translation factor GTPase superfamily. Classic translation factor GTPase family. EF-Tu/EF-1A subfamily. In terms of assembly, monomer.

The protein resides in the cytoplasm. It carries out the reaction GTP + H2O = GDP + phosphate + H(+). In terms of biological role, GTP hydrolase that promotes the GTP-dependent binding of aminoacyl-tRNA to the A-site of ribosomes during protein biosynthesis. The polypeptide is Elongation factor Tu (Syntrophus aciditrophicus (strain SB)).